A 103-amino-acid polypeptide reads, in one-letter code: Small ribosomal subunit protein uS14c (103 aa).

Positions 27 to 56 are disordered; that stretch reads SKKKIRSKVSPLSLSEKTKMQEKLQSLPRN.

The protein belongs to the universal ribosomal protein uS14 family. In terms of assembly, part of the 30S ribosomal subunit.

It is found in the plastid. Its subcellular location is the chloroplast. Its function is as follows. Binds 16S rRNA, required for the assembly of 30S particles. The chain is Small ribosomal subunit protein uS14c from Zea mays (Maize).